A 179-amino-acid polypeptide reads, in one-letter code: Large ribosomal subunit protein uL6 (179 aa).

It belongs to the universal ribosomal protein uL6 family. As to quaternary structure, part of the 50S ribosomal subunit.

In terms of biological role, this protein binds to the 23S rRNA, and is important in its secondary structure. It is located near the subunit interface in the base of the L7/L12 stalk, and near the tRNA binding site of the peptidyltransferase center. The polypeptide is Large ribosomal subunit protein uL6 (Methylacidiphilum infernorum (isolate V4) (Methylokorus infernorum (strain V4))).